A 122-amino-acid chain; its full sequence is Large ribosomal subunit protein uL18 (122 aa).

A compositionally biased stretch (basic residues) spans 1–19 (MSTLSRKQKTQKRHKRLRR). Residues 1–26 (MSTLSRKQKTQKRHKRLRRNLSGTDQ) are disordered.

Belongs to the universal ribosomal protein uL18 family. Part of the 50S ribosomal subunit; part of the 5S rRNA/L5/L18/L25 subcomplex. Contacts the 5S and 23S rRNAs.

In terms of biological role, this is one of the proteins that bind and probably mediate the attachment of the 5S RNA into the large ribosomal subunit, where it forms part of the central protuberance. The chain is Large ribosomal subunit protein uL18 from Prochlorococcus marinus (strain SARG / CCMP1375 / SS120).